The sequence spans 265 residues: Undecaprenyl-diphosphatase (265 aa).

The next 7 membrane-spanning stretches (helical) occupy residues 42-62, 90-110, 115-135, 160-182, 195-215, 222-242, and 245-265; these read EAIPISIWLHLGTLLAAIVYF, ISFLLISTALTGIVGLPLLLF, VEISGGSATAVIGIMLIVTGI, VAQGFAAIPGISRSGITMSALLL, FLMSIPAVLVAEIGVGLMGMV, IVGLFFAFAFGLVTIDLFLKV, and KVDFSYFCIGLGVLSVLTMFL.

This sequence belongs to the UppP family.

The protein resides in the cell membrane. It catalyses the reaction di-trans,octa-cis-undecaprenyl diphosphate + H2O = di-trans,octa-cis-undecaprenyl phosphate + phosphate + H(+). Catalyzes the dephosphorylation of undecaprenyl diphosphate (UPP). The polypeptide is Undecaprenyl-diphosphatase (Methanococcoides burtonii (strain DSM 6242 / NBRC 107633 / OCM 468 / ACE-M)).